The chain runs to 79 residues: uncharacterized protein (79 aa).

The segment covering 22–72 (NNNNNNNNNNNNNNNNNNNNNNNNNNNNNNNNNNNNNNNNNNNNNNNNNNN) has biased composition (low complexity). The tract at residues 22–79 (NNNNNNNNNNNNNNNNNNNNNNNNNNNNNNNNNNNNNNNNNNNNNNNNNNNKRFFFFG) is disordered.

This is an uncharacterized protein from Dictyostelium discoideum (Social amoeba).